The following is a 77-amino-acid chain: Surfactant-associated protein 2 (77 aa).

The first 19 residues, 1-19 (MESLMRLFLLLALLSSSHA), serve as a signal peptide directing secretion. Asparagine 61 is a glycosylation site (N-linked (GlcNAc...) asparagine).

Post-translationally, N-glycosylated. Expressed in lung, and specifically in alveolar type II epithelial cells.

Its subcellular location is the secreted. The protein resides in the cytoplasmic vesicle. The protein localises to the secretory vesicle. It is found in the golgi apparatus. Putative surfactant protein. The polypeptide is Surfactant-associated protein 2 (Mus musculus (Mouse)).